The following is a 527-amino-acid chain: SusD-like protein P25 (527 aa).

Positions 1–15 (MKIQNIIVYVFLIFS) are cleaved as a signal peptide. Cys16 carries N-palmitoyl cysteine lipidation. Cys16 carries S-diacylglycerol cysteine lipidation.

The protein belongs to the SusD family.

The protein localises to the cell outer membrane. Polysaccharide-binding protein probably involved in ulvan degradation. Ulvan is the main polysaccharide component of the Ulvales (green seaweed) cell wall. It is composed of disaccharide building blocks comprising 3-sulfated rhamnose (Rha3S) linked to D-glucuronic acid (GlcA), L-iduronic acid (IduA), or D-xylose (Xyl). The SusD-like protein may mediate ulvan oligomer-binding before transport in the periplasm for further degradation. The polypeptide is SusD-like protein P25 (Formosa agariphila (strain DSM 15362 / KCTC 12365 / LMG 23005 / KMM 3901 / M-2Alg 35-1)).